The sequence spans 81 residues: ATP synthase subunit c, chloroplastic (81 aa).

Transmembrane regions (helical) follow at residues 7–27 (AASV…PGIG) and 57–77 (LAFM…LLFA).

Belongs to the ATPase C chain family. As to quaternary structure, F-type ATPases have 2 components, F(1) - the catalytic core - and F(0) - the membrane proton channel. F(1) has five subunits: alpha(3), beta(3), gamma(1), delta(1), epsilon(1). F(0) has four main subunits: a(1), b(1), b'(1) and c(10-14). The alpha and beta chains form an alternating ring which encloses part of the gamma chain. F(1) is attached to F(0) by a central stalk formed by the gamma and epsilon chains, while a peripheral stalk is formed by the delta, b and b' chains.

The protein localises to the plastid. It is found in the chloroplast thylakoid membrane. Its function is as follows. F(1)F(0) ATP synthase produces ATP from ADP in the presence of a proton or sodium gradient. F-type ATPases consist of two structural domains, F(1) containing the extramembraneous catalytic core and F(0) containing the membrane proton channel, linked together by a central stalk and a peripheral stalk. During catalysis, ATP synthesis in the catalytic domain of F(1) is coupled via a rotary mechanism of the central stalk subunits to proton translocation. In terms of biological role, key component of the F(0) channel; it plays a direct role in translocation across the membrane. A homomeric c-ring of between 10-14 subunits forms the central stalk rotor element with the F(1) delta and epsilon subunits. This Pelargonium hortorum (Common geranium) protein is ATP synthase subunit c, chloroplastic.